Here is a 61-residue protein sequence, read N- to C-terminus: Large ribosomal subunit protein uL30 (61 aa).

The segment at 1 to 20 is disordered; that stretch reads MSQKKVTVRQVGSPIGRKPE.

This sequence belongs to the universal ribosomal protein uL30 family. As to quaternary structure, part of the 50S ribosomal subunit.

This Hyphomonas neptunium (strain ATCC 15444) protein is Large ribosomal subunit protein uL30.